A 289-amino-acid polypeptide reads, in one-letter code: 4-diphosphocytidyl-2-C-methyl-D-erythritol kinase (289 aa).

Lys-10 is an active-site residue. ATP is bound at residue 94-104; the sequence is PVAAGLAGGSS. The active site involves Asp-136.

It belongs to the GHMP kinase family. IspE subfamily.

The catalysed reaction is 4-CDP-2-C-methyl-D-erythritol + ATP = 4-CDP-2-C-methyl-D-erythritol 2-phosphate + ADP + H(+). It functions in the pathway isoprenoid biosynthesis; isopentenyl diphosphate biosynthesis via DXP pathway; isopentenyl diphosphate from 1-deoxy-D-xylulose 5-phosphate: step 3/6. Catalyzes the phosphorylation of the position 2 hydroxy group of 4-diphosphocytidyl-2C-methyl-D-erythritol. This Bacillus velezensis (strain DSM 23117 / BGSC 10A6 / LMG 26770 / FZB42) (Bacillus amyloliquefaciens subsp. plantarum) protein is 4-diphosphocytidyl-2-C-methyl-D-erythritol kinase.